We begin with the raw amino-acid sequence, 152 residues long: Nucleoside diphosphate kinase (152 aa).

Lysine 11, phenylalanine 59, arginine 87, threonine 93, arginine 104, and asparagine 114 together coordinate ATP. The active-site Pros-phosphohistidine intermediate is histidine 117.

Belongs to the NDK family. In terms of assembly, homotetramer. It depends on Mg(2+) as a cofactor.

It is found in the cytoplasm. The enzyme catalyses a 2'-deoxyribonucleoside 5'-diphosphate + ATP = a 2'-deoxyribonucleoside 5'-triphosphate + ADP. The catalysed reaction is a ribonucleoside 5'-diphosphate + ATP = a ribonucleoside 5'-triphosphate + ADP. Major role in the synthesis of nucleoside triphosphates other than ATP. The ATP gamma phosphate is transferred to the NDP beta phosphate via a ping-pong mechanism, using a phosphorylated active-site intermediate. In Prochlorococcus marinus (strain AS9601), this protein is Nucleoside diphosphate kinase.